The sequence spans 1530 residues: Synaptonemal complex protein 2 (1530 aa).

Residues 439–461 (EKSKSPKEFAKPSKYIKNSDKGN) show a composition bias toward basic and acidic residues. The disordered stretch occupies residues 439-480 (EKSKSPKEFAKPSKYIKNSDKGNRNNSQLEKTTPSKRKMSEA). A phosphoserine mark is found at Ser-457 and Ser-465. Thr-471 is modified (phosphothreonine). Phosphoserine is present on residues Ser-494, Ser-519, Ser-529, and Ser-538. The disordered stretch occupies residues 496–555 (VLFSNTSIPPRRRRIKPPLQMTSSAEKPSVSQTSENRVDNAASLKSRSSEGRHRRDNIDK). A compositionally biased stretch (polar residues) spans 515–530 (QMTSSAEKPSVSQTSE). The segment covering 542–555 (RSSEGRHRRDNIDK) has biased composition (basic and acidic residues). Thr-619 is modified (phosphothreonine). Disordered stretches follow at residues 653–676 (QKSSSSISDHNSEGTGKVKYKKEQ), 693–717 (HNQQQNHPKYSGQKNTENAKQSDWP), and 755–795 (DKNP…SKGK). Residues Ser-660 and Ser-664 each carry the phosphoserine modification. 2 stretches are compositionally biased toward polar residues: residues 695–713 (QQQNHPKYSGQKNTENAKQ) and 755–764 (DKNPSASKNV). The residue at position 936 (Ser-936) is a Phosphoserine. Thr-938 carries the phosphothreonine modification. The segment at 962–1003 (QLIDYSRNKNVKNHKSGKSRSSLEKGQPSSKMTPSKNITKKM) is disordered. Over residues 970 to 979 (KNVKNHKSGK) the composition is skewed to basic residues. The span at 988-998 (QPSSKMTPSKN) shows a compositional bias: polar residues. 5 positions are modified to phosphoserine: Ser-1136, Ser-1138, Ser-1145, Ser-1161, and Ser-1177. Thr-1189 carries the post-translational modification Phosphothreonine. Phosphoserine occurs at positions 1204, 1234, 1253, 1295, and 1297. Thr-1339 carries the post-translational modification Phosphothreonine.

The protein belongs to the SYCP2 family. As to quaternary structure, component of the lateral elements of synaptonemal complexes. Heterodimer with SYCP3. Interacts with SMC1A and SMC3. Interacts with TEX11. Post-translationally, phosphorylated.

It localises to the nucleus. The protein resides in the chromosome. Its function is as follows. Major component of the axial/lateral elements of synaptonemal complexes (SCS) during meiotic prophase. Plays a role in the assembly of synaptonemal complexes. Required for normal meiotic chromosome synapsis during oocyte and spermatocyte development and for normal male and female fertility. Required for insertion of SYCP3 into synaptonemal complexes. May be involved in the organization of chromatin by temporarily binding to DNA scaffold attachment regions. Requires SYCP3, but not SYCP1, in order to be incorporated into the axial/lateral elements. This is Synaptonemal complex protein 2 (SYCP2) from Homo sapiens (Human).